A 203-amino-acid chain; its full sequence is Cryptic neisserial protein 1 (203 aa).

Residues 1 to 18 form the signal peptide; sequence MRRAILLILTLTVGTSLA.

Belongs to the Cnp family.

Its subcellular location is the periplasm. It is found in the cytoplasm. In Neisseria gonorrhoeae (strain ATCC 700825 / FA 1090), this protein is Cryptic neisserial protein 1.